Reading from the N-terminus, the 513-residue chain is Anthranilate synthase component 1 (513 aa).

Residues serine 50 and 279–281 contribute to the L-tryptophan site; that span reads PYM. 314–315 contacts chorismate; that stretch reads GT. Glutamate 341 contacts Mg(2+). Chorismate is bound by residues tyrosine 429, arginine 449, 463–465, and glycine 465; that span reads GAG. Glutamate 478 is a binding site for Mg(2+).

This sequence belongs to the anthranilate synthase component I family. As to quaternary structure, heterotetramer consisting of two non-identical subunits: a beta subunit (TrpG) and a large alpha subunit (TrpE). It depends on Mg(2+) as a cofactor.

It catalyses the reaction chorismate + L-glutamine = anthranilate + pyruvate + L-glutamate + H(+). It functions in the pathway amino-acid biosynthesis; L-tryptophan biosynthesis; L-tryptophan from chorismate: step 1/5. With respect to regulation, feedback inhibited by tryptophan. Part of a heterotetrameric complex that catalyzes the two-step biosynthesis of anthranilate, an intermediate in the biosynthesis of L-tryptophan. In the first step, the glutamine-binding beta subunit (TrpG) of anthranilate synthase (AS) provides the glutamine amidotransferase activity which generates ammonia as a substrate that, along with chorismate, is used in the second step, catalyzed by the large alpha subunit of AS (TrpE) to produce anthranilate. In the absence of TrpG, TrpE can synthesize anthranilate directly from chorismate and high concentrations of ammonia. This is Anthranilate synthase component 1 (trpE) from Bacillus pumilus (Bacillus mesentericus).